Here is a 229-residue protein sequence, read N- to C-terminus: Biosynthetic peptidoglycan transglycosylase (229 aa).

Residues 14–34 (FITWRFLLVVVLLLLVLLLVL) form a helical membrane-spanning segment.

This sequence belongs to the glycosyltransferase 51 family.

It localises to the cell inner membrane. It carries out the reaction [GlcNAc-(1-&gt;4)-Mur2Ac(oyl-L-Ala-gamma-D-Glu-L-Lys-D-Ala-D-Ala)](n)-di-trans,octa-cis-undecaprenyl diphosphate + beta-D-GlcNAc-(1-&gt;4)-Mur2Ac(oyl-L-Ala-gamma-D-Glu-L-Lys-D-Ala-D-Ala)-di-trans,octa-cis-undecaprenyl diphosphate = [GlcNAc-(1-&gt;4)-Mur2Ac(oyl-L-Ala-gamma-D-Glu-L-Lys-D-Ala-D-Ala)](n+1)-di-trans,octa-cis-undecaprenyl diphosphate + di-trans,octa-cis-undecaprenyl diphosphate + H(+). The protein operates within cell wall biogenesis; peptidoglycan biosynthesis. Functionally, peptidoglycan polymerase that catalyzes glycan chain elongation from lipid-linked precursors. This chain is Biosynthetic peptidoglycan transglycosylase, found in Shewanella denitrificans (strain OS217 / ATCC BAA-1090 / DSM 15013).